We begin with the raw amino-acid sequence, 173 residues long: Protein-export protein SecB (173 aa).

Positions 148–173 (QQQKQRREQGTSDSAPSGSPDNGGRQ) are disordered. The segment covering 158–167 (TSDSAPSGSP) has biased composition (polar residues).

The protein belongs to the SecB family. As to quaternary structure, homotetramer, a dimer of dimers. One homotetramer interacts with 1 SecA dimer.

The protein localises to the cytoplasm. One of the proteins required for the normal export of preproteins out of the cell cytoplasm. It is a molecular chaperone that binds to a subset of precursor proteins, maintaining them in a translocation-competent state. It also specifically binds to its receptor SecA. This chain is Protein-export protein SecB, found in Halorhodospira halophila (strain DSM 244 / SL1) (Ectothiorhodospira halophila (strain DSM 244 / SL1)).